Here is a 161-residue protein sequence, read N- to C-terminus: Phosphopantetheine adenylyltransferase (161 aa).

Thr-10 is a substrate binding site. ATP is bound by residues 10 to 11 and His-18; that span reads TF. Residues Lys-42, Leu-75, and Arg-89 each contribute to the substrate site. Residues 90–92, Glu-100, and 125–131 each bind ATP; these read GLR and YSFLSSS.

It belongs to the bacterial CoaD family. Homohexamer. Requires Mg(2+) as cofactor.

It is found in the cytoplasm. The enzyme catalyses (R)-4'-phosphopantetheine + ATP + H(+) = 3'-dephospho-CoA + diphosphate. Its pathway is cofactor biosynthesis; coenzyme A biosynthesis; CoA from (R)-pantothenate: step 4/5. Its function is as follows. Reversibly transfers an adenylyl group from ATP to 4'-phosphopantetheine, yielding dephospho-CoA (dPCoA) and pyrophosphate. This Thermodesulfovibrio yellowstonii (strain ATCC 51303 / DSM 11347 / YP87) protein is Phosphopantetheine adenylyltransferase.